The sequence spans 460 residues: Probable amino acid transporter skat-1 (460 aa).

A run of 10 helical transmembrane segments spans residues 64–84 (LGGL…NWYG), 132–152 (FVNV…ILFI), 172–192 (MILM…FTEM), 194–214 (IVSF…AVIM), 236–256 (TITM…ILPI), 270–290 (FGVL…LGFF), 316–336 (VNVF…YVVY), 362–382 (GFRV…PKLE), 383–403 (IMIP…FPPF), and 426–446 (IFIN…GVYT).

Belongs to the amino acid/polyamine transporter 2 family. As to expression, expressed in the head, tail, body and ventral nerve cord neurons, muscles of the vulva, and intestine.

The protein localises to the membrane. Its subcellular location is the cytoplasmic granule. In terms of biological role, plays a role in the accumulation of vital dyes and endogenous fluorescent compounds in lysosome related organelles. Has an effect on lysosome related organelle (LRO) function, in a pathway with serotonin. This Caenorhabditis elegans protein is Probable amino acid transporter skat-1.